The sequence spans 47 residues: MNVSFKILGYEIASIEFDFGEDDERELTPLDKGRKALSRWWVRGMVK.

This is Gene 60 protein (60) from Mycobacterium phage L5 (Mycobacteriophage L5).